Consider the following 326-residue polypeptide: tRNA U34 carboxymethyltransferase (326 aa).

Carboxy-S-adenosyl-L-methionine is bound by residues lysine 91, tryptophan 105, lysine 110, glycine 130, methionine 196, tyrosine 200, and arginine 315.

The protein belongs to the class I-like SAM-binding methyltransferase superfamily. CmoB family. In terms of assembly, homotetramer.

It catalyses the reaction carboxy-S-adenosyl-L-methionine + 5-hydroxyuridine(34) in tRNA = 5-carboxymethoxyuridine(34) in tRNA + S-adenosyl-L-homocysteine + H(+). In terms of biological role, catalyzes carboxymethyl transfer from carboxy-S-adenosyl-L-methionine (Cx-SAM) to 5-hydroxyuridine (ho5U) to form 5-carboxymethoxyuridine (cmo5U) at position 34 in tRNAs. This is tRNA U34 carboxymethyltransferase from Tolumonas auensis (strain DSM 9187 / NBRC 110442 / TA 4).